The primary structure comprises 652 residues: tRNA 5-methylaminomethyl-2-thiouridine biosynthesis bifunctional protein MnmC (652 aa).

The interval 1 to 235 (MPDRLVPATL…EPALRVGEYA (235 aa)) is tRNA (mnm(5)s(2)U34)-methyltransferase. An FAD-dependent cmnm(5)s(2)U34 oxidoreductase region spans residues 259-652 (IGAGLAGCAV…IRALRGRQIG (394 aa)).

This sequence in the N-terminal section; belongs to the methyltransferase superfamily. tRNA (mnm(5)s(2)U34)-methyltransferase family. It in the C-terminal section; belongs to the DAO family. The cofactor is FAD.

It localises to the cytoplasm. It catalyses the reaction 5-aminomethyl-2-thiouridine(34) in tRNA + S-adenosyl-L-methionine = 5-methylaminomethyl-2-thiouridine(34) in tRNA + S-adenosyl-L-homocysteine + H(+). In terms of biological role, catalyzes the last two steps in the biosynthesis of 5-methylaminomethyl-2-thiouridine (mnm(5)s(2)U) at the wobble position (U34) in tRNA. Catalyzes the FAD-dependent demodification of cmnm(5)s(2)U34 to nm(5)s(2)U34, followed by the transfer of a methyl group from S-adenosyl-L-methionine to nm(5)s(2)U34, to form mnm(5)s(2)U34. This chain is tRNA 5-methylaminomethyl-2-thiouridine biosynthesis bifunctional protein MnmC, found in Burkholderia ambifaria (strain ATCC BAA-244 / DSM 16087 / CCUG 44356 / LMG 19182 / AMMD) (Burkholderia cepacia (strain AMMD)).